The following is a 464-amino-acid chain: Asparagine--tRNA ligase (464 aa).

The protein belongs to the class-II aminoacyl-tRNA synthetase family. As to quaternary structure, homodimer.

It localises to the cytoplasm. It catalyses the reaction tRNA(Asn) + L-asparagine + ATP = L-asparaginyl-tRNA(Asn) + AMP + diphosphate + H(+). In Clostridium botulinum (strain Alaska E43 / Type E3), this protein is Asparagine--tRNA ligase.